Consider the following 500-residue polypeptide: Probable zinc metalloprotease MGYG_02393 (500 aa).

The N-terminal stretch at 1 to 24 (MHLSMGGLLPGLALLASANALALA) is a signal peptide. Residues asparagine 61, asparagine 103, and asparagine 124 are each glycosylated (N-linked (GlcNAc...) asparagine). Residues histidine 174, aspartate 194, and glutamate 230 each contribute to the Zn(2+) site. Asparagine 245 is a glycosylation site (N-linked (GlcNAc...) asparagine). Aspartate 257 contributes to the Zn(2+) binding site. The region spanning 414–500 (MPRNVRVNTS…ERGVAVLPFP (87 aa)) is the Fibronectin type-III domain. Asparagine 421 and asparagine 427 each carry an N-linked (GlcNAc...) asparagine glycan.

Belongs to the peptidase M28 family. M28B subfamily. Zn(2+) is required as a cofactor.

The protein localises to the secreted. In Arthroderma gypseum (strain ATCC MYA-4604 / CBS 118893) (Microsporum gypseum), this protein is Probable zinc metalloprotease MGYG_02393.